The following is a 78-amino-acid chain: Large ribosomal subunit protein bL28 (78 aa).

It belongs to the bacterial ribosomal protein bL28 family.

In Proteus mirabilis (strain HI4320), this protein is Large ribosomal subunit protein bL28.